Reading from the N-terminus, the 1735-residue chain is MNFLSTAESRTAQAAASGTTLLPQFRAPSWQTGMHSSAATELFATGPLPSTGTLPPSLSAYQHPTTFSNRNFATTSPLVLQDSTFNTTSNGILSHHDPLLQIKTSQGTVPTALAFERLGSSVLSNSIPPQSSTYRSAQESAPHLLQPQFSLLPSALGGSQQTPQAYSSTLFTSSTASIERALLRECSVIKHHQRPSGTQSIQAQLTGSQHSLHSYLSNSSVVNFQETTRQSSLSCSPIGDSTQVSNGGLQQKTSQVSVELAQSYSSAIPSSGYPPSTTKIKSCSTEQPLTSTKTPKPQSIIPPVQTLSYSKPLHNQSSVISGQAQIYSTAQLPSLLSVSQSQNYGLVQPHNVPSIVHSQVYRSSKVEKLPPLYKTLTFSGSSQTVTPENQTLNYSSNQQEVLSSVTNENYPAQTRDLSSVSQSQSYSSGHSQGLSPVSQTQVSYSSQSQVLSVVSLSESYASGESLTLTAPSLSYSSASRAQNLPDSSPTQNYISMHSSQNVQTQESSSPQSQKFLPAVQSSSFASSTHCQTLQNNITSPDPKSYAERKLDSDVYPSSKQEDGFPMQELQVLQPQASLESSTQRLSDGEINAQESTYKVSKADDRYSQSVIRSNSRLEDQVIGVALQASKKEESVVGSVTQLNQQIGQVNNAATLDLKNSTNLIQTPQIRLNTKDLKQQHPLILKVHESKVQEQHDQIINASSQIQIPNHALGHGHQASLPNTQVLLDSACDLQILQQSILQAGLGQVKASLQAQRVQSPQQIVHPFLQMEGHVIQSNGDHSQQQLHPQNSEVMKMDLSESSKPLQQHLTTKGHFSETNQHDSKNQFVSLGSMCFPEAVLLSDERNILSNVDDILAATAAACGVTPTDFSKSTSNETMQAVEDGDSKSHFQQSLDVRHVTSDFNSMTATVGKPQNINDTSLNGNQVTVNLSPVPALQSKMTLDQQHIETPGQNIPTKVTSAVVGPSHEVQEQSSGPFKKQSATNLESEEDSEAPVDSTLNNNRNQEFVSSSRSISGENATSESEFTLGGDDSGVSMNPARSALALLAMAQSGDAVSVKIEEENQDLMHFNLQKKRAKGKGQVKEEDNSNQKQLKRPAQGKRQNPRGTDIYLPYTPPSSESCHDGYQHQEKMRQKIKEVEEKQPEVKTGFIASFLDFLKSGPKQQFSTLAVRMPNRTRRPGTQMVRTFCPPPLPKPSSTTPTPLVSETGGNSPSDKVDNELKNLEHLSSFSSDEDDPGYSQDAYKSVSTPLTTLDATSDKKKKTEALQVATTSPTANTTGTATTSSTTVGAVKQEPLHSTSYAVNILENISSSESSKPIELDGLPSDQFAKGQDTVAIEGFTDEEDTESGGEGQYRERDEFVVKIEDIETFKEALKTGKEPPAIWKVQKALLQKFVPEIRDGQREFAATNSYLGYFGDAKSKYKRIYVKFIENANKKEYVRVCSKKPRNKPSQTIRTVQAKPSSSSKTSDPLASKTTTTKAPSVKPKVKQPKVKAEPPPKKRKKWKEEFSSSQSDSSPEIHTSSSDDEEFEPPAPFVTRFLNTRAMKETFKSYMELLVSIALDPDTMQALEKSNDELLLPHMKKIDGMLNDNRKRLLLNLHLDQSFKNALESFPELTIITRDSKAKSGGTAISKIKMNGKAYNKKTLRTSKTTTKSAQEFAVDPEKIQLYSLYHSLHHYKYHVYLICKDEISSVQKKNEDLGQEEIVQLCMKNVKWVEDLFEKFGELLNHVQQKCS.

Position 1 is an N-acetylmethionine (Met-1). A compositionally biased stretch (polar residues) spans 267-297 (AIPSSGYPPSTTKIKSCSTEQPLTSTKTPKP). 4 disordered regions span residues 267 to 301 (AIPS…QSII), 414 to 440 (TRDL…VSQT), 479 to 518 (SRAQ…FLPA), and 533 to 561 (LQNN…SKQE). Over residues 417–440 (LSSVSQSQSYSSGHSQGLSPVSQT) the composition is skewed to low complexity. Phosphoserine occurs at positions 586, 615, and 886. Residue Thr-949 is modified to Phosphothreonine. The interval 964-1033 (GPSHEVQEQS…EFTLGGDDSG (70 aa)) is disordered. Positions 971 to 985 (EQSSGPFKKQSATNL) are enriched in polar residues. Ser-987 bears the Phosphoserine mark. Positions 997-1024 (STLNNNRNQEFVSSSRSISGENATSESE) are enriched in polar residues. Residues Lys-1058 and Lys-1083 each participate in a glycyl lysine isopeptide (Lys-Gly) (interchain with G-Cter in SUMO2) cross-link. Disordered regions lie at residues 1073-1132 (KKRA…EKMR) and 1178-1217 (RPGT…DKVD). Positions 1120 to 1132 (SCHDGYQHQEKMR) are enriched in basic and acidic residues. A phosphoserine mark is found at Ser-1211, Ser-1230, Ser-1231, and Ser-1239. Residues 1256-1286 (TSDKKKKTEALQVATTSPTANTTGTATTSST) are disordered. The span at 1269 to 1286 (ATTSPTANTTGTATTSST) shows a compositional bias: low complexity. Phosphothreonine is present on Thr-1341. Phosphoserine is present on Ser-1348. The disordered stretch occupies residues 1441–1532 (VCSKKPRNKP…SSDDEEFEPP (92 aa)). The span at 1449–1478 (KPSQTIRTVQAKPSSSSKTSDPLASKTTTT) shows a compositional bias: polar residues. Residues 1492 to 1508 (VKAEPPPKKRKKWKEEF) show a composition bias toward basic and acidic residues.

As to quaternary structure, interacts with TET1.

The protein localises to the chromosome. Plays an essential role in the protection and maintenance of transcriptional and developmental programs. Protects many bivalent promoters and poised enhancers from hypermethylation, showing a marked preference for these regulatory elements over other types of promoters or enhancers. Mechanistically, cooperates with TET1 and binds to DNA in a common complex to inhibit the binding of DNMT3A/3B and therefore de novo methylation. The protein is Glutamine and serine-rich protein 1 (QSER1) of Homo sapiens (Human).